Consider the following 95-residue polypeptide: Acyl carrier protein AcpXL (95 aa).

Positions 4–90 (TATFDKVADI…NLCAKIDELR (87 aa)) constitute a Carrier domain. S39 bears the O-(pantetheine 4'-phosphoryl)serine mark.

In terms of processing, 4'-phosphopantetheine is transferred from CoA to a specific serine of apo-ACP by AcpS. This modification is essential for activity because fatty acids are bound in thioester linkage to the sulfhydryl of the prosthetic group.

The protein resides in the cytoplasm. Its pathway is glycolipid biosynthesis; KDO(2)-lipid A biosynthesis. Carrier of the growing fatty acid chain in fatty acid biosynthesis. Is involved in the transfer of long hydroxylated fatty acids to lipid A. The chain is Acyl carrier protein AcpXL (acpXL) from Rhizobium meliloti (strain 1021) (Ensifer meliloti).